We begin with the raw amino-acid sequence, 359 residues long: Type-1 angiotensin II receptor B (359 aa).

Residues Met-1–Asn-25 are Extracellular-facing. Asn-4 carries N-linked (GlcNAc...) asparagine glycosylation. The angiotensin II site is built by Gln-15 and Asp-17. 2 disulfides stabilise this stretch: Cys-18–Cys-274 and Cys-101–Cys-180. A helical membrane pass occupies residues Tyr-26–Phe-55. Residues Tyr-56–Thr-61 lie on the Cytoplasmic side of the membrane. Residues Val-62–Ala-89 traverse the membrane as a helical segment. Over Met-90–Asn-98 the chain is Extracellular. A helical membrane pass occupies residues His-99–Asp-125. Over Arg-126 to Thr-141 the chain is Cytoplasmic. A helical membrane pass occupies residues Met-142–Ile-165. The Extracellular portion of the chain corresponds to His-166–Thr-190. Arg-167 contacts angiotensin II. Asn-176 is a glycosylation site (N-linked (GlcNAc...) asparagine). Phe-182, His-183, and Tyr-184 together coordinate angiotensin II. Asn-188 carries N-linked (GlcNAc...) asparagine glycosylation. The helical transmembrane segment at Leu-191–Thr-216 threads the bilayer. Lys-199 provides a ligand contact to angiotensin II. Over Leu-217 to Phe-239 the chain is Cytoplasmic. A helical transmembrane segment spans residues Arg-240–Leu-268. At Gly-269–Asp-278 the chain is on the extracellular side. The chain crosses the membrane as a helical span at residues Val-279–Phe-304. The Cytoplasmic segment spans residues Leu-305 to Glu-359. Cys-355 carries S-palmitoyl cysteine lipidation.

It belongs to the G-protein coupled receptor 1 family. Interacts with MAS1. Interacts with ARRB1. Interacts with FLNA (via filamin repeat 21); increases PKA-mediated phosphorylation of FLNA. Post-translationally, C-terminal Ser or Thr residues may be phosphorylated.

Its subcellular location is the cell membrane. Functionally, receptor for angiotensin II, a vasoconstricting peptide, which acts as a key regulator of blood pressure and sodium retention by the kidney. The activated receptor in turn couples to G-alpha proteins G(q) (GNAQ, GNA11, GNA14 or GNA15) and thus activates phospholipase C and increases the cytosolic Ca(2+) concentrations, which in turn triggers cellular responses such as stimulation of protein kinase C. The chain is Type-1 angiotensin II receptor B (Agtr1b) from Mus musculus (Mouse).